The primary structure comprises 277 residues: S-formylglutathione hydrolase FrmB (277 aa).

Catalysis depends on charge relay system residues serine 145, aspartate 221, and histidine 254.

Belongs to the esterase D family.

The catalysed reaction is S-formylglutathione + H2O = formate + glutathione + H(+). In terms of biological role, serine hydrolase involved in the detoxification of formaldehyde. Hydrolyzes S-formylglutathione to glutathione and formate. The polypeptide is S-formylglutathione hydrolase FrmB (frmB) (Escherichia coli O6:K15:H31 (strain 536 / UPEC)).